A 446-amino-acid chain; its full sequence is NADH-ubiquinone oxidoreductase chain 4 (446 aa).

The next 14 helical transmembrane spans lie at 4–24 (LILMMIFISPICFMQGLFWMV), 28–48 (LFVITFVLILMNFCLNYFVNI), 56–76 (VLSYGLILLSFWICSLMIVAS), 88–105 (LFLFNVLMLLIFLVLTFS), 109–131 (LFMFYLFFESSLIPTLFLILGWG), 141–161 (VYLLFYTLLVSLPLLVGIFYL), 182–202 (LLYLAMILAFLVKMPMFLVHL), 218–238 (ILAGIMLKLGGYGLLAVFSFL), 245–265 (YNYIWVSISLIGGVLISLVCL), 272–292 (ALIAYSSVAHMGIVLGGLMTL), 297–317 (LSGSYTLMIGHGLCSSGLFCL), 330–350 (LLINKGLLNFMPSMTLWWFLL), 373–393 (IVSWSWLTMISLSFLSFFSAA), and 426–446 (FLHWFPLNLLILKSEVCLFWI).

This sequence belongs to the complex I subunit 4 family.

Its subcellular location is the mitochondrion membrane. The enzyme catalyses a ubiquinone + NADH + 5 H(+)(in) = a ubiquinol + NAD(+) + 4 H(+)(out). In terms of biological role, core subunit of the mitochondrial membrane respiratory chain NADH dehydrogenase (Complex I) that is believed to belong to the minimal assembly required for catalysis. Complex I functions in the transfer of electrons from NADH to the respiratory chain. The immediate electron acceptor for the enzyme is believed to be ubiquinone. The sequence is that of NADH-ubiquinone oxidoreductase chain 4 (ND4) from Ceratitis capitata (Mediterranean fruit fly).